We begin with the raw amino-acid sequence, 122 residues long: UPF0102 protein CLH_1204 (122 aa).

The protein belongs to the UPF0102 family.

The polypeptide is UPF0102 protein CLH_1204 (Clostridium botulinum (strain Alaska E43 / Type E3)).